The sequence spans 186 residues: Ribosome-recycling factor (186 aa).

This sequence belongs to the RRF family.

The protein localises to the cytoplasm. Its function is as follows. Responsible for the release of ribosomes from messenger RNA at the termination of protein biosynthesis. May increase the efficiency of translation by recycling ribosomes from one round of translation to another. The polypeptide is Ribosome-recycling factor (Burkholderia mallei (strain NCTC 10247)).